The sequence spans 520 residues: Tetratricopeptide repeat protein 6 (520 aa).

TPR repeat units follow at residues 57 to 90, 101 to 138, 139 to 172, 176 to 209, 210 to 243, 245 to 280, 281 to 314, 320 to 347, 348 to 381, 382 to 415, 416 to 449, 450 to 483, and 484 to 517; these read MTMCALLAKVQMKAKRTKEAVEVLKKALDAISHS, ADCLYNLGLCYMEEGNLQMTYKLAITDLTTAISMDKNS, YTAFYNRALCYTKIRELQMALTDYGIVLLLDATE, LNTFLNRGLIYVELGQYGFALEDFKQAALISRTN, GSLCHATAMCHHRINEFEEAVNFFTWALKINPCF, DAYVGRGNSYMEYGHDEATKQAQKDFLKALHINPAY, IKARISFGYNLQAQGKFQKAWNHFTIAIDTDPKN, GRAVVCLQMGNNFAAMQDINAAMKISTT, AEFLTNRGVIHEFMGHKQNAMKDYQDAITLNPKY, SLAYFNAGNIYFHHRQFSQASDYFSKALKFDPEN, EYVLMNRAITNTILKKYEEAKEDFANVIESCPFW, AAVYFNRAHFYYCLKQYELAEEDLNKALSLKPND, and ALVYNFRAKVRGKIGLIEEAMADYNQALDLEDYA.

This is Tetratricopeptide repeat protein 6 from Homo sapiens (Human).